Consider the following 774-residue polypeptide: MQYPAATAEGLSGPLSGAYTLPAFKFQPRRESIDWRRISAVDVDRVARELDVATLQENIAGVTFCNLDGEVCNHCRQPVDPVLLKVLRLAQLIIEYLLHCQDCLSASVAQLEARLQASLGQQQRGQQELGRQADELKGVREESRRRRKMISTLQQLLLQTSAHSYHTCHLCDKTFMNATFLRGHIQRRHAGMADVGKQKQEQPLGEVLEELRAKLKWTQGELEAQREAERQRQVQELEMARQREMEAKKKFDEWKEKERSKLYGEIDKLKQLFWDEFKTVANQNSTLEEKLKALQSYSMTESHLGSLRDEESEERLKHAQEVQALQEKMEVQKTEWKRKMKALHEERAAERRQLQEENERLHVSLSQDQKKAAAQSQRHINALRAQLQEQARLIESQEETIQTLSLRKVEEVQEMPKAVATEEDSSEEELEASLEERQEQRKVLAALRKNPTWLKQFRPILEDTLEEKLEGLGIKRDTKGISAQTVRRLEPLLRTQREQIARSFREFPSLREKLNKEVSSRVKQRWESTTQPDGQPPVKSQRVTLATREVRPKTRTLTVALPSKPAEPSTPTLQGHSSHGPGLTQVSTPIPRPRVHGPSSTPVSPGSGLSSTPPFSSEEEPEGDVVQRVSLQPPKVLPRSAAKPEDNWGWSDSETSEESAQPPGKGSGGLASSGTLVQSIVKNLEKQLETPAKKPSGGVNMFLRPNAALQRASTPARKSQLSEDESDVEISSLEDLSQDLGQKGKPKPLSHSKLPEKFDVSPWSSGSRPRIPGW.

The C2H2-type zinc-finger motif lies at 166-189 (HTCHLCDKTFMNATFLRGHIQRRH). A coiled-coil region spans residues 204-450 (LGEVLEELRA…RKVLAALRKN (247 aa)). Disordered stretches follow at residues 415–435 (MPKA…ASLE), 515–674 (NKEV…ASSG), and 686–774 (KQLE…IPGW). Acidic residues predominate over residues 421–433 (TEEDSSEEELEAS). Phosphoserine is present on residues serine 425 and serine 426. A compositionally biased stretch (basic and acidic residues) spans 515 to 526 (NKEVSSRVKQRW). Over residues 597–616 (GPSSTPVSPGSGLSSTPPFS) the composition is skewed to low complexity.

This sequence belongs to the DZIP C2H2-type zinc-finger protein family. In terms of assembly, interacts with SEPTIN2.

The protein localises to the cytoplasm. It is found in the cytoskeleton. The protein resides in the cilium basal body. Its subcellular location is the microtubule organizing center. It localises to the centrosome. The protein localises to the centriole. Involved in primary cilium formation. Probably acts as a transition zone protein required for localization of PKD1/PC1 and PKD2/PC2 to the ciliary membrane. The sequence is that of Cilium assembly protein DZIP1L from Mus musculus (Mouse).